Consider the following 360-residue polypeptide: NAD(P)H-quinone oxidoreductase subunit 1, chloroplastic (360 aa).

The next 8 membrane-spanning stretches (helical) occupy residues 27–47 (IWIF…VLVI), 98–118 (FSIG…IIPF), 129–149 (IGIF…LMSG), 165–185 (AAQS…ISLL), 203–223 (FWGW…ISSL), 253–273 (FGLF…FVTV), 297–317 (IFGT…FLFI), and 340–360 (FLLP…LFSL).

The protein belongs to the complex I subunit 1 family. In terms of assembly, NDH is composed of at least 16 different subunits, 5 of which are encoded in the nucleus.

Its subcellular location is the plastid. The protein localises to the chloroplast thylakoid membrane. It catalyses the reaction a plastoquinone + NADH + (n+1) H(+)(in) = a plastoquinol + NAD(+) + n H(+)(out). The catalysed reaction is a plastoquinone + NADPH + (n+1) H(+)(in) = a plastoquinol + NADP(+) + n H(+)(out). NDH shuttles electrons from NAD(P)H:plastoquinone, via FMN and iron-sulfur (Fe-S) centers, to quinones in the photosynthetic chain and possibly in a chloroplast respiratory chain. The immediate electron acceptor for the enzyme in this species is believed to be plastoquinone. Couples the redox reaction to proton translocation, and thus conserves the redox energy in a proton gradient. The polypeptide is NAD(P)H-quinone oxidoreductase subunit 1, chloroplastic (Lobularia maritima (Sweet alyssum)).